A 419-amino-acid polypeptide reads, in one-letter code: MTTQLEQAWELAKQRFAAVGIDVEEALRQLDRLPVSMHCWQGDDVSGFENPEGSLTGGIQATGNYPGKARNASELRADLEQAMRLIPGPKRLNLHAIYLESDTPVSRDQIKPEHFKNWVEWAKANQLGLDFNPSCFSHPLSADGFTLSHPDDSIRQFWIDHCKASRRVSAYFGEQLGTPSVMNIWIPDGMKDITVDRLAPRQRLLAALDEVISEKLNPAHHIDAVESKLFGIGAESYTVGSNEFYMGYATSRQTALCLDAGHFHPTEVISDKISAAMLYVPQLLLHVSRPVRWDSDHVVLLDDETQAIASEIVRHDLFDRVHIGLDFFDASINRIAAWVIGTRNMKKALLRALLEPTAELRKLEAAGDYTARLALLEEQKSLPRQAVWEMYCQRHDTPAGSEWLESVRAYEKAILSQRG.

Residues H262, D294, and D296 each contribute to the Mn(2+) site.

The protein belongs to the rhamnose isomerase family. Homotetramer. Mn(2+) is required as a cofactor.

The protein resides in the cytoplasm. The enzyme catalyses L-rhamnopyranose = L-rhamnulose. The protein operates within carbohydrate degradation; L-rhamnose degradation; glycerone phosphate from L-rhamnose: step 1/3. Functionally, catalyzes the interconversion of L-rhamnose and L-rhamnulose. The chain is L-rhamnose isomerase from Shigella flexneri serotype 5b (strain 8401).